A 162-amino-acid polypeptide reads, in one-letter code: 18.5 kDa class IV heat shock protein (162 aa).

The sHSP domain maps to 53–149 (TSSSTVNTQL…PPQLPEIEEN (97 aa)).

It belongs to the small heat shock protein (HSP20) family. May form oligomeric structures.

The protein resides in the cytoplasm. This chain is 18.5 kDa class IV heat shock protein (HSP18.5), found in Arabidopsis thaliana (Mouse-ear cress).